We begin with the raw amino-acid sequence, 359 residues long: MIDTVYGFGQGLMGGIWPATVWPVLWALIKIVCVLLPLMGCVAYLTLWERKAIGFTQIRFGPNRVGPFGLLQPIADALKLLTKEIIMPTAASKGLFVLGPIMTIMPALAAWAVIPFGPDIALSNINAGLLFLMAITSMEVYGVIIAGWASNSKYAFLGAMRASAQMVSYEIAMGFCLVVVLMVSASLNMTDIVMSQAKGIAVGYGLNFLSWNWLPLLPIFVVYFISGLAETNRHPFDVVEGESEIVAGHMVEYSGMAFAMFFLAEYANMWLVAILAVILFLGGWLSPVDWWLFNLIPGWIWLGAKTFVVVTMFLWVRATFPRFRYDQIMRLGWKIFIPVTLVWLVVVGAWMQTPYNIWK.

8 consecutive transmembrane segments (helical) span residues 16-36, 94-114, 129-149, 167-187, 208-228, 261-281, 296-316, and 331-351; these read IWPATVWPVLWALIKIVCVLL, GLFVLGPIMTIMPALAAWAVI, LLFLMAITSMEVYGVIIAGWA, VSYEIAMGFCLVVVLMVSASL, FLSWNWLPLLPIFVVYFISGL, FFLAEYANMWLVAILAVILFL, IPGWIWLGAKTFVVVTMFLWV, and LGWKIFIPVTLVWLVVVGAWM.

Belongs to the complex I subunit 1 family. As to quaternary structure, NDH-1 is composed of 14 different subunits. Subunits NuoA, H, J, K, L, M, N constitute the membrane sector of the complex.

Its subcellular location is the cell inner membrane. It carries out the reaction a quinone + NADH + 5 H(+)(in) = a quinol + NAD(+) + 4 H(+)(out). Functionally, NDH-1 shuttles electrons from NADH, via FMN and iron-sulfur (Fe-S) centers, to quinones in the respiratory chain. The immediate electron acceptor for the enzyme in this species is believed to be ubiquinone. Couples the redox reaction to proton translocation (for every two electrons transferred, four hydrogen ions are translocated across the cytoplasmic membrane), and thus conserves the redox energy in a proton gradient. This subunit may bind ubiquinone. This chain is NADH-quinone oxidoreductase subunit H, found in Polaromonas sp. (strain JS666 / ATCC BAA-500).